A 509-amino-acid polypeptide reads, in one-letter code: Photosystem II CP47 reaction center protein (509 aa).

6 helical membrane passes run 21–36 (SVHI…WAGS), 101–115 (IVFS…IWHW), 140–156 (GIHL…FGAF), 203–218 (IAAG…FHLS), 237–252 (VLSS…AFVV), and 457–472 (SFAL…HGAR).

Belongs to the PsbB/PsbC family. PsbB subfamily. In terms of assembly, PSII is composed of 1 copy each of membrane proteins PsbA, PsbB, PsbC, PsbD, PsbE, PsbF, PsbH, PsbI, PsbJ, PsbK, PsbL, PsbM, PsbT, PsbX, PsbY, PsbZ, Psb30/Ycf12, at least 3 peripheral proteins of the oxygen-evolving complex and a large number of cofactors. It forms dimeric complexes. Binds multiple chlorophylls. PSII binds additional chlorophylls, carotenoids and specific lipids. is required as a cofactor.

The protein resides in the plastid. It localises to the chloroplast thylakoid membrane. One of the components of the core complex of photosystem II (PSII). It binds chlorophyll and helps catalyze the primary light-induced photochemical processes of PSII. PSII is a light-driven water:plastoquinone oxidoreductase, using light energy to abstract electrons from H(2)O, generating O(2) and a proton gradient subsequently used for ATP formation. This is Photosystem II CP47 reaction center protein from Cicer arietinum (Chickpea).